The chain runs to 302 residues: Urease accessory protein UreD 2 (302 aa).

The protein belongs to the UreD family. As to quaternary structure, ureD, UreF and UreG form a complex that acts as a GTP-hydrolysis-dependent molecular chaperone, activating the urease apoprotein by helping to assemble the nickel containing metallocenter of UreC. The UreE protein probably delivers the nickel.

It is found in the cytoplasm. Its function is as follows. Required for maturation of urease via the functional incorporation of the urease nickel metallocenter. The chain is Urease accessory protein UreD 2 from Brucella ovis (strain ATCC 25840 / 63/290 / NCTC 10512).